The sequence spans 1453 residues: MLLLDIMDSHCIHTLVDQRASSQPLEPAVETYDVSLSYGELSAMSSKLSQYLVSLGIYPEAKVVLMMEPCASYVVSTISVLKAGATFVPLDATQPTKRLAQLIKDIKPFIIITSIEVQDKARSLYDNVLVVDQTPSPWQDAPLKTGAACHVNGSNAAYIIFTSGSTGLPKGVIIEHGAFSASALARGNLTGLSLGSRVLQYAAHTFDVSVDEILTTLIHGGCVCIPSKADRLLLEPAINRLQVNHALLTPTSAKVLDPDAVPSLKTLQLGGELLPDDLIRKWCSRVRLFNVYGPTEASVACIMSEKSQKNIFGNVIGFPVGSVCRIVDPDDHNQLVAPGVVGELLIGGRILARGYLNDNIRTASSFIESPPWTSDDNATRFYKTGDLAKIDHYGSVTILGRKDNQVKIRGQRINVEEIETTLLATHLIRNCVVELPKKGPLANKLVAIVSTTSDTPHCKHPPPAAFSEQLQASVSTLDGLLRTRLHDALQDHLTSAMIPKRWIRMTSLPETTSGKVNRKEIRRWLERMDASVLQSVSLSNVESTGSRQSTRHKIQPEHEKILCRILGVNPTLLKPHLSFIQNGGDSIAAIELCRLGREIGISFWISSVLSDNSLEKLFHTSKSRFTKTIAHESQPGTPFPLSPVQRFFFDVVGNEHSSFTQYVTLQLKNRISIAQLERVIDRLVSAHPMLRARFHSENDTWLQSIPERISGSYSIFHHHGVGPPNHELMQPPVLSLASDPVLNVRLWDFDSGPQQLQLIAHHLVVDLVSWRIILDDLSKALRHERLPSAGMSFQSWCALQKEYAKTLDPKLVLPIPIISDNCAYWYPSVAQQENKHGMTETSTFSFDMLTFNSLLVGSLSKTQPIELMVGSFYTAFAKVFSDRETPTVFVESHGREPWQTGIDILQTVGWFTTAYPIHVPAQKASDLNESTLHTMRARRSIPANGHQYWCHRFLEQYEPDERKRSAPLEFVINFAGQFQQLSQADLPFRVMSTVGEETAEPQARRLSLFDIFISVEGDQLHFNISFPSWVSHRDKIHHLSTVWKDVLESAGVFSERPVLDPEPIDMLRELWHDCSLKDIDEVYWASDAQNHMLNSSSRHPSFYTVVGRWRLKCNTGAPLTDAFRVQDAWKRVITNHRALRTIFIPGDRKCGFLAVVMEQSFPMVLTGGASDTSDTNGTTRFFGLQSNERAIHLPHRIILHESNDGSILFSLEISHTVIDATSRSILMNELLDALVDIDLVPDDSHYHEYIESRDALYALSPPCQPPPCIFPPDLHCSDSAGSQLSTHVVELSQTSTANMSQICSQHGITMSSLLFLSWTLVLSNYTSSDDISFAYVASGRSMDVPGIERFVGLYVDLLILNIDTSGSDCLLDLALRVQQMSAGSSLHQHNQIPACRNPKNGRFDGQVNTMVNIRNVGIDSLRLERHDFELLLDSFEDPWDVRFFNTSCPFLPI.

An adenylation region spans residues 37–433 (SYGELSAMSS…ATHLIRNCVV (397 aa)). The region spanning 544–626 (TGSRQSTRHK…LFHTSKSRFT (83 aa)) is the Carrier domain. An O-(pantetheine 4'-phosphoryl)serine modification is found at Ser-586. Residues 639 to 1053 (FPLSPVQRFF…KDVLESAGVF (415 aa)) form an epimerization (E) domain region. The tract at residues 1181-1391 (FFGLQSNERA…AGSSLHQHNQ (211 aa)) is condensation.

Belongs to the NRP synthetase family. Requires pantetheine 4'-phosphate as cofactor.

It participates in secondary metabolite biosynthesis. Functionally, NRPS-like tryptophan epimerase; part of the fragmented gene cluster that mediates the biosynthesis of fusarochromene, a tryptophan-derived metabolite closely related to a group of mycotoxins including fusarochromanone. Within the pathway, fscC catalyzes the first step via epimerization of L-tryptophan to provide the intermediate D-tryptophan. D-tryptophan is subsequently hydroxylated by the tryptophan 6-hydroxylase fscE to yield 6-hydroxytryptophan. The pyrrole ring undergoes cleavaged by the tryptophan 2,3-dioxygenase fscD and is finally converted to 4-hydroxykyrunenine by the hydrolase fscH. The NRPS-like oxidoreductase fscA reduces the carboxyl group to primary alcohol and the DMATS-type prenyltransferase fscG performs prenylation, followed by the formation of a chromene ring catalyzed by the oxidoreductase fscI, which leads to desacetylfusarochromene. Epoxidation by fscF and rearrangement reactions of chromene double bonds convert compound desacetylfusarochromene to fusarochromanones. Although specific acetyltransferases were not found near the fsc gene cluster, several predicted enzymes containing the N-acetyltransferase superfamily domain are present in the genome of F.equiseti. These predicted enzymes may have the potential to convert desacetylfusarochromene to fusarochromene. In Fusarium equiseti (Fusarium scirpi), this protein is NRPS-like tryptophan epimerase fscC.